Here is a 256-residue protein sequence, read N- to C-terminus: Ribonuclease 3-like protein 1 (256 aa).

The RNase III domain maps to 22–168 (AEVERALGGY…IVGAVYLDSK (147 aa)). Glu65, Asp154, and Glu157 together coordinate Mg(2+).

Mg(2+) is required as a cofactor. Mn(2+) serves as cofactor.

Functionally, cleaves double-stranded RNA (dsRNA). This chain is Ribonuclease 3-like protein 1, found in Oryza sativa subsp. japonica (Rice).